A 526-amino-acid chain; its full sequence is Carotenoid cleavage oxygenase 1 (526 aa).

The disordered stretch occupies residues 1-33 (MAEYVFSDAPKDSHGNGVKDAVPGKQPEELPPA). Piceatannol-binding residues include tyrosine 133 and lysine 164. Tyrosine 133 and lysine 164 together coordinate trans-resveratrol. Fe cation-binding residues include histidine 197, histidine 248, and histidine 313. Glutamate 383 lines the piceatannol pocket. Glutamate 383 contributes to the trans-resveratrol binding site. Fe cation is bound at residue histidine 510.

This sequence belongs to the carotenoid oxygenase family. Requires Fe(2+) as cofactor.

The catalysed reaction is trans-resveratrol + O2 = 3,5-dihydroxybenzaldehyde + 4-hydroxybenzaldehyde. It catalyses the reaction piceatannol + O2 = 3,5-dihydroxybenzaldehyde + 3,4-dihydroxybenzaldehyde. Dioxygenase that cleaves the interphenyl C-alpha-C-beta double bond of resveratrol to yield 3,5-dihydroxybenzaldehyde and 4-hydroxybenzaldehyde. Also cleaves piceatannol, a compound that differs from resveratrol only in the occurrence of an additional hydroxyl group, which leads to the production of 3,4-dihydroxybenzaldehyde and 3,5-hydroxybenzaldehyde. Is not able to cleave trans-stilbene, 4-monohydroxy-trans-stilbene, 3,5-dihydroxy-trans-stilbene (pinosylvin), trismethoxy-resveratrol, and 3,3',5-trihydroxy-4'-methoxystilbene-3-O-beta-D-glucoside. Is not involved in carotenoid metabolism. The sequence is that of Carotenoid cleavage oxygenase 1 from Neurospora crassa (strain ATCC 24698 / 74-OR23-1A / CBS 708.71 / DSM 1257 / FGSC 987).